A 631-amino-acid chain; its full sequence is Occlusion-derived virus envelope protein E66 (631 aa).

This sequence belongs to the baculoviridae E66 family.

It localises to the virion membrane. Functionally, component of the polyhedra envelope. In Leucania separata nucleopolyhedrovirus (LsNPV), this protein is Occlusion-derived virus envelope protein E66.